The chain runs to 3387 residues: Genome polyprotein (3387 aa).

At Met1 to Ser100 the chain is on the cytoplasmic side. The interval Leu36–Leu71 is hydrophobic; homodimerization of capsid protein C. Positions Ser100–Ala113 are cleaved as a propeptide — ER anchor for the capsid protein C, removed in mature form by serine protease NS3. A helical membrane pass occupies residues Thr101–Ser117. The Extracellular segment spans residues Thr118–Glu237. N-linked (GlcNAc...) asparagine; by host glycosylation occurs at Asn182. The helical transmembrane segment at Ser238–Gly258 threads the bilayer. The Cytoplasmic portion of the chain corresponds to Gln259–Thr265. A helical transmembrane segment spans residues Val266–Gly279. The Extracellular portion of the chain corresponds to Met280 to Thr725. Disulfide bonds link Cys282–Cys309, Cys339–Cys400, Cys353–Cys384, and Cys371–Cys395. N-linked (GlcNAc...) asparagine; by host glycosylation is present at Asn346. The tract at residues Asp377–Gly390 is fusion peptide. A glycan (N-linked (GlcNAc...) asparagine; by host) is linked at Asn432. Intrachain disulfides connect Cys464–Cys564 and Cys581–Cys612. A helical transmembrane segment spans residues Met726–Gly746. Residues Thr747–Asn751 are Cytoplasmic-facing. The chain crosses the membrane as a helical span at residues Thr752 to Val772. The Extracellular portion of the chain corresponds to Gln773 to Ile1194. Intrachain disulfides connect Cys778/Cys789, Cys829/Cys917, Cys953/Cys997, Cys1054/Cys1103, Cys1065/Cys1087, and Cys1086/Cys1090. Asn904 and Asn981 each carry an N-linked (GlcNAc...) asparagine; by host glycan. Residues Gly1195 to Leu1218 form a helical membrane-spanning segment. At Arg1219 to Arg1224 the chain is on the lumenal side. A helical membrane pass occupies residues Glu1225–His1243. Topologically, residues Asp1244–Asn1267 are cytoplasmic. Residues Thr1268–Met1288 form a helical membrane-spanning segment. A topological domain (lumenal) is located at residue Ala1289. Residues Trp1290 to Thr1308 traverse the membrane as a helical segment. Over Ser1309–His1316 the chain is Lumenal. A helical membrane pass occupies residues Trp1317–Leu1337. The Cytoplasmic portion of the chain corresponds to Met1338 to Ser1345. The chain crosses the membrane as a helical span at residues Trp1346–Leu1366. Residues Lys1367–Asp1369 lie on the Lumenal side of the membrane. Residues Val1370–Gly1390 form a helical membrane-spanning segment. Over Ser1391–Asn1437 the chain is Cytoplasmic. The interacts with and activates NS3 protease stretch occupies residues Leu1397–Thr1436. The helical intramembrane region spans Met1438–Ile1458. At Pro1459–Ser2143 the chain is on the cytoplasmic side. Residues Ser1475–Val1652 form the Peptidase S7 domain. Catalysis depends on charge relay system; for serine protease NS3 activity residues His1525, Asp1549, and Ser1609. In terms of domain architecture, Helicase ATP-binding spans Glu1654–Glu1810. Residues Arg1658 to Arg1661 are important for RNA-binding. ATP is bound at residue Leu1667–Thr1674. The short motif at Asp1758–His1761 is the DEAH box element. In terms of domain architecture, Helicase C-terminal spans Thr1820–Arg1987. At Lys1862 the chain carries N6-acetyllysine; by host. A helical membrane pass occupies residues Leu2144–Phe2164. The Lumenal portion of the chain corresponds to Met2165–Gly2169. Positions Ile2170–Ala2190 form an intramembrane region, helical. Position 2191 (Glu2191) is a topological domain, lumenal. A helical membrane pass occupies residues Ile2192 to Ile2212. Topologically, residues Pro2213 to Gln2225 are cytoplasmic. Residues Leu2226–Gly2246 form a helical membrane-spanning segment. Topologically, residues Leu2247–Asp2270 are lumenal. Residues Leu2271 to Leu2291 constitute an intramembrane region (helical). Over Arg2292–Asn2301 the chain is Lumenal. 2 N-linked (GlcNAc...) asparagine; by host glycosylation sites follow: Asn2297 and Asn2301. The helical intramembrane region spans Leu2302–Pro2322. At Leu2323 to Pro2343 the chain is on the lumenal side. The helical transmembrane segment at Thr2344–Leu2364 threads the bilayer. The Cytoplasmic portion of the chain corresponds to Gln2365 to Gln2409. The chain crosses the membrane as a helical span at residues Val2410–Cys2430. Residues Glu2431–Thr2455 are Lumenal-facing. Asn2453 carries N-linked (GlcNAc...) asparagine; by host glycosylation. The helical transmembrane segment at Ile2456 to Phe2476 threads the bilayer. At Ser2477 to Leu3387 the chain is on the cytoplasmic side. The mRNA cap 0-1 NS5-type MT domain maps to Thr2489–Ser2751. S-adenosyl-L-methionine is bound at residue Ser2543. Ser2543 carries the post-translational modification Phosphoserine. The active-site For 2'-O-MTase activity is the Lys2548. An SUMO-interacting motif motif is present at residues Val2564–Leu2567. Residues Gly2573, Trp2574, Thr2591, Lys2592, Asp2618, and Val2619 each coordinate S-adenosyl-L-methionine. Asp2633 serves as the catalytic For 2'-O-MTase activity. An S-adenosyl-L-methionine-binding site is contributed by Ile2634. Residues Lys2668 and Glu2704 each act as for 2'-O-MTase activity in the active site. An S-adenosyl-L-methionine-binding site is contributed by Tyr2706. Zn(2+)-binding residues include Glu2925, His2929, Cys2934, and Cys2937. In terms of domain architecture, RdRp catalytic spans Leu3016–Leu3166. Positions 3200, 3216, and 3335 each coordinate Zn(2+).

The protein in the N-terminal section; belongs to the class I-like SAM-binding methyltransferase superfamily. mRNA cap 0-1 NS5-type methyltransferase family. In terms of assembly, homodimer. Interacts (via N-terminus) with host EXOC1 (via C-terminus); this interaction results in EXOC1 degradation through the proteasome degradation pathway. Forms heterodimers with envelope protein E in the endoplasmic reticulum and Golgi. As to quaternary structure, homodimer; in the endoplasmic reticulum and Golgi. Interacts with protein prM. Interacts with non-structural protein 1. In terms of assembly, homodimer; Homohexamer when secreted. Interacts with envelope protein E. Interacts (via N-terminus) with serine protease NS3. As to quaternary structure, forms a heterodimer with serine protease NS3. May form homooligomers. In terms of assembly, forms a heterodimer with NS2B. Interacts with NS4B. Interacts with unphosphorylated RNA-directed RNA polymerase NS5; this interaction stimulates RNA-directed RNA polymerase NS5 guanylyltransferase activity. Interacts with host SHFL. Interacts with host MAVS; this interaction inhibits the synthesis of IFN-beta. Interacts with host SHFL. Interacts with host AUP1; the interaction occurs in the presence of Dengue virus NS4B and induces lipophagy which facilitates production of virus progeny particles. As to quaternary structure, interacts with serine protease NS3. In terms of assembly, homodimer. Interacts with host STAT2; this interaction inhibits the phosphorylation of the latter, and, when all viral proteins are present (polyprotein), targets STAT2 for degradation. Interacts with serine protease NS3. Interacts with host PAF1 complex; the interaction may prevent the recruitment of the PAF1 complex to interferon-responsive genes, and thus reduces the immune response. In terms of processing, specific enzymatic cleavages in vivo yield mature proteins. Cleavages in the lumen of endoplasmic reticulum are performed by host signal peptidase, whereas cleavages in the cytoplasmic side are performed by serine protease NS3. Signal cleavage at the 2K-4B site requires a prior NS3 protease-mediated cleavage at the 4A-2K site. Post-translationally, cleaved in post-Golgi vesicles by a host furin, releasing the mature small envelope protein M, and peptide pr. This cleavage is incomplete as up to 30% of viral particles still carry uncleaved prM. N-glycosylated. In terms of processing, N-glycosylated. The excreted form is glycosylated and this is required for efficient secretion of the protein from infected cells. Post-translationally, acetylated by host KAT5. Acetylation modulates NS3 RNA-binding and unwinding activities and plays an important positive role for viral replication. Sumoylation of RNA-directed RNA polymerase NS5 increases NS5 protein stability allowing proper viral RNA replication. In terms of processing, phosphorylated on serines residues. This phosphorylation may trigger NS5 nuclear localization.

It localises to the virion. The protein localises to the host nucleus. Its subcellular location is the host cytoplasm. It is found in the host perinuclear region. The protein resides in the secreted. It localises to the virion membrane. The protein localises to the host endoplasmic reticulum membrane. Its subcellular location is the host mitochondrion. The enzyme catalyses Selective hydrolysis of -Xaa-Xaa-|-Yaa- bonds in which each of the Xaa can be either Arg or Lys and Yaa can be either Ser or Ala.. The catalysed reaction is RNA(n) + a ribonucleoside 5'-triphosphate = RNA(n+1) + diphosphate. It catalyses the reaction a ribonucleoside 5'-triphosphate + H2O = a ribonucleoside 5'-diphosphate + phosphate + H(+). It carries out the reaction ATP + H2O = ADP + phosphate + H(+). The enzyme catalyses a 5'-end (5'-triphosphoguanosine)-ribonucleoside in mRNA + S-adenosyl-L-methionine = a 5'-end (N(7)-methyl 5'-triphosphoguanosine)-ribonucleoside in mRNA + S-adenosyl-L-homocysteine. The catalysed reaction is a 5'-end (N(7)-methyl 5'-triphosphoguanosine)-ribonucleoside in mRNA + S-adenosyl-L-methionine = a 5'-end (N(7)-methyl 5'-triphosphoguanosine)-(2'-O-methyl-ribonucleoside) in mRNA + S-adenosyl-L-homocysteine + H(+). Its function is as follows. Plays a role in virus budding by binding to the cell membrane and gathering the viral RNA into a nucleocapsid that forms the core of a mature virus particle. During virus entry, may induce genome penetration into the host cytoplasm after hemifusion induced by the surface proteins. Can migrate to the cell nucleus where it modulates host functions. Overcomes the anti-viral effects of host EXOC1 by sequestering and degrading the latter through the proteasome degradation pathway. Functionally, regulates the ATPase activity of the NS3 helicase activity. NS4A allows NS3 helicase to conserve energy during unwinding. Plays a role in the inhibition of the host innate immune response. Interacts with host MAVS and thereby prevents the interaction between RIGI and MAVS. In turn, IFN-beta production is impaired. Interacts with host AUP1 which mediates induction of lipophagy in host cells and facilitates production of virus progeny particles. In terms of biological role, inhibits RNA silencing by interfering with host Dicer. Prevents premature fusion activity of envelope proteins in trans-Golgi by binding to envelope protein E at pH6.0. After virion release in extracellular space, gets dissociated from E dimers. Its function is as follows. Acts as a chaperone for envelope protein E during intracellular virion assembly by masking and inactivating envelope protein E fusion peptide. prM is the only viral peptide matured by host furin in the trans-Golgi network probably to avoid catastrophic activation of the viral fusion activity in acidic Golgi compartment prior to virion release. prM-E cleavage is inefficient, and many virions are only partially matured. These uncleaved prM would play a role in immune evasion. Functionally, may play a role in virus budding. Exerts cytotoxic effects by activating a mitochondrial apoptotic pathway through M ectodomain. May display a viroporin activity. In terms of biological role, binds to host cell surface receptor and mediates fusion between viral and cellular membranes. Envelope protein is synthesized in the endoplasmic reticulum in the form of heterodimer with protein prM. They play a role in virion budding in the ER, and the newly formed immature particle is covered with 60 spikes composed of heterodimer between precursor prM and envelope protein E. The virion is transported to the Golgi apparatus where the low pH causes dissociation of PrM-E heterodimers and formation of E homodimers. prM-E cleavage is inefficient, and many virions are only partially matured. These uncleaved prM would play a role in immune evasion. Involved in immune evasion, pathogenesis and viral replication. Once cleaved off the polyprotein, is targeted to three destinations: the viral replication cycle, the plasma membrane and the extracellular compartment. Essential for viral replication. Required for formation of the replication complex and recruitment of other non-structural proteins to the ER-derived membrane structures. Excreted as a hexameric lipoparticle that plays a role against host immune response. Antagonizing the complement function. Binds to the host macrophages and dendritic cells. Inhibits signal transduction originating from Toll-like receptor 3 (TLR3). Its function is as follows. Disrupts the host endothelial glycocalyx layer of host pulmonary microvascular endothelial cells, inducing degradation of sialic acid and shedding of heparan sulfate proteoglycans. NS1 induces expression of sialidases, heparanase, and activates cathepsin L, which activates heparanase via enzymatic cleavage. These effects are probably linked to the endothelial hyperpermeability observed in severe dengue disease. Functionally, component of the viral RNA replication complex that functions in virion assembly and antagonizes the host immune response. In terms of biological role, required cofactor for the serine protease function of NS3. May have membrane-destabilizing activity and form viroporins. Displays three enzymatic activities: serine protease, NTPase and RNA helicase. NS3 serine protease, in association with NS2B, performs its autocleavage and cleaves the polyprotein at dibasic sites in the cytoplasm: C-prM, NS2A-NS2B, NS2B-NS3, NS3-NS4A, NS4A-2K and NS4B-NS5. NS3 RNA helicase binds RNA and unwinds dsRNA in the 3' to 5' direction. Its function is as follows. Functions as a signal peptide for NS4B and is required for the interferon antagonism activity of the latter. Functionally, induces the formation of ER-derived membrane vesicles where the viral replication takes place. Inhibits interferon (IFN)-induced host STAT1 phosphorylation and nuclear translocation, thereby preventing the establishment of cellular antiviral state by blocking the IFN-alpha/beta pathway. In terms of biological role, replicates the viral (+) and (-) RNA genome, and performs the capping of genomes in the cytoplasm. NS5 methylates viral RNA cap at guanine N-7 and ribose 2'-O positions. Besides its role in RNA genome replication, also prevents the establishment of cellular antiviral state by blocking the interferon-alpha/beta (IFN-alpha/beta) signaling pathway. Inhibits host TYK2 and STAT2 phosphorylation, thereby preventing activation of JAK-STAT signaling pathway. May reduce immune responses by preventing the recruitment of the host PAF1 complex to interferon-responsive genes. The protein is Genome polyprotein of Dengue virus type 4 (strain Dominica/814669/1981) (DENV-4).